A 204-amino-acid chain; its full sequence is MKVKICGITDMETAKRACEYGADALGFVFAESKRKITPGLAKEIIQELPANVLKIGVFVNESVEVIQKITENCGLTHVQLHGGEDNHQIRRLNIPSIKSLGVTSESDMKNAQGYETDYILFDSPKEKFHGGNGKTFSWELLAHMPKELREKAILAGGLNTLNIEEAIRTVRPYMVDVSSGVETEGKKDVEKIKQFIIKAKECSK.

It belongs to the TrpF family.

It catalyses the reaction N-(5-phospho-beta-D-ribosyl)anthranilate = 1-(2-carboxyphenylamino)-1-deoxy-D-ribulose 5-phosphate. Its pathway is amino-acid biosynthesis; L-tryptophan biosynthesis; L-tryptophan from chorismate: step 3/5. This chain is N-(5'-phosphoribosyl)anthranilate isomerase, found in Bacillus cereus (strain ZK / E33L).